Here is a 173-residue protein sequence, read N- to C-terminus: Regulator of ribonuclease activity A (173 aa).

Belongs to the RraA family. Homotrimer. Binds to both RNA-binding sites in the C-terminal region of Rne and to RhlB.

It localises to the cytoplasm. Globally modulates RNA abundance by binding to RNase E (Rne) and regulating its endonucleolytic activity. Can modulate Rne action in a substrate-dependent manner by altering the composition of the degradosome. Modulates RNA-binding and helicase activities of the degradosome. The sequence is that of Regulator of ribonuclease activity A from Vibrio vulnificus (strain YJ016).